The following is a 547-amino-acid chain: Chaperonin GroEL (547 aa).

Residues 30–33 (TLGP), Lys51, 87–91 (DGTTT), Gly415, and Asp495 contribute to the ATP site. Residues 526-547 (KKESAGGGGMPGGMGGMGGMDF) form a disordered region. Over residues 530 to 547 (AGGGGMPGGMGGMGGMDF) the composition is skewed to gly residues.

This sequence belongs to the chaperonin (HSP60) family. As to quaternary structure, forms a cylinder of 14 subunits composed of two heptameric rings stacked back-to-back. Interacts with the co-chaperonin GroES.

The protein resides in the cytoplasm. It carries out the reaction ATP + H2O + a folded polypeptide = ADP + phosphate + an unfolded polypeptide.. Its function is as follows. Together with its co-chaperonin GroES, plays an essential role in assisting protein folding. The GroEL-GroES system forms a nano-cage that allows encapsulation of the non-native substrate proteins and provides a physical environment optimized to promote and accelerate protein folding. In Hyphomonas neptunium (strain ATCC 15444), this protein is Chaperonin GroEL.